A 1368-amino-acid chain; its full sequence is Kinesin-like protein KIF24 (1368 aa).

The SAM domain occupies 1 to 64 (MASWLYECLC…FQLIKIIKIM (64 aa)). The disordered stretch occupies residues 89–112 (ELRSGPRRQLNFDSPADNKDRNAS). S102 and S112 each carry phosphoserine. The region spanning 223–546 (KIRVCVRKRP…LRYADRVKEL (324 aa)) is the Kinesin motor domain. Residue 313-320 (GQTGAGKT) coordinates ATP. Residue S478 is modified to Phosphoserine. Residues 478–709 (SLLALKECIR…STKCKKVQTV (232 aa)) are interaction with MPHOSPH9. Residues 557 to 576 (TSRNRTSGNSSPKRIQSSPG) are compositionally biased toward polar residues. Disordered stretches follow at residues 557–584 (TSRN…DKCS) and 602–639 (GSTR…SPSQ). Phosphoserine is present on S584. At T621 the chain carries Phosphothreonine; by NEK2. S622 is subject to Phosphoserine; by NEK2. Phosphoserine is present on S646. 5 disordered regions span residues 651–670 (TVRS…PLCS), 729–753 (HRAE…WTNI), 792–849 (QYRP…NTLE), 864–938 (GPEK…LAEK), and 952–984 (RGGG…EEDG). A compositionally biased stretch (acidic residues) spans 819 to 830 (QVEELDDSDFSE). S826 and S829 each carry phosphoserine. Polar residues-rich tracts occupy residues 839 to 849 (QRATKQRNTLE) and 871 to 881 (ERQQSLFSSPR). Basic and acidic residues predominate over residues 882 to 906 (TGDKKDLTKSWVDSRDPINHRRAAL). At S1012 the chain carries Phosphoserine. 2 disordered regions span residues 1054 to 1073 (MSLL…QLVQ) and 1086 to 1148 (GGPV…SREA). Residues 1106–1119 (SSATRHLWLSSSPP) show a composition bias toward polar residues. Residues 1138 to 1148 (HPADKLPSREA) are compositionally biased toward basic and acidic residues.

Belongs to the TRAFAC class myosin-kinesin ATPase superfamily. Kinesin family. Interacts with CCP110, CEP97, TALPID3. Interacts with MPHOSPH9.

The protein resides in the cytoplasm. The protein localises to the cytoskeleton. Its subcellular location is the microtubule organizing center. It is found in the centrosome. It localises to the centriole. Microtubule-dependent motor protein that acts as a negative regulator of ciliogenesis by mediating recruitment of CCP110 to mother centriole in cycling cells, leading to restrict nucleation of cilia at centrioles. Mediates depolymerization of microtubules of centriolar origin, possibly to suppress aberrant cilia formation. Following activation by NEK2 involved in disassembly of primary cilium during G2/M phase but does not disassemble fully formed ciliary axonemes. As cilium assembly and disassembly is proposed to coexist in a dynamic equilibrium may suppress nascent cilium assembly and, potentially, ciliar re-assembly in cells that have already disassembled their cilia ensuring the completion of cilium removal in the later stages of the cell cycle. Plays an important role in recruiting MPHOSPH9, a negative regulator of cilia formation to the distal end of mother centriole. The polypeptide is Kinesin-like protein KIF24 (KIF24) (Homo sapiens (Human)).